The sequence spans 325 residues: Olfactory receptor 5H6 (325 aa).

The Extracellular segment spans residues 1–41 (MFLYLCFIFQRTCSEEMEEENATLLTEFVLTGFLHQPDCKI). Asparagine 21 is a glycosylation site (N-linked (GlcNAc...) asparagine). Residues 42-62 (PLFLAFLVIYLITIMGNLGLI) traverse the membrane as a helical segment. Residues 63-70 (VLIWKDPH) are Cytoplasmic-facing. Residues 71–91 (LHIPMYLFLGSLAFVDASLSS) traverse the membrane as a helical segment. Topologically, residues 92–115 (TVTPKMLINFLAKSKMISLSECMV) are extracellular. A disulfide bridge connects residues cysteine 113 and cysteine 205. The helical transmembrane segment at 116–136 (QFFSLVTTVTTECFLLATMAY) threads the bilayer. Residues 137-155 (DRYVAICKALLYPVIMTNE) are Cytoplasmic-facing. A helical membrane pass occupies residues 156–176 (LCIQLLVLSFIGGLLHALIHE). The Extracellular segment spans residues 177-212 (AFSFRLTFCNSNIIQHFYCDIIPLLKISCTDSSINF). Residues 213 to 233 (LMVFIFAGSVQVFTIGTILIS) traverse the membrane as a helical segment. Residues 234–253 (YTIILFTILEKKSIKGIRKA) are Cytoplasmic-facing. A helical transmembrane segment spans residues 254–274 (VSTCGAHLLSVSLYYGPLTFK). The Extracellular segment spans residues 275-287 (YLGSASPQADDQD). A helical transmembrane segment spans residues 288 to 308 (MMESLFYTVIVPLLNPMIYSL). At 309-325 (RNKQVIASFTKMFKSNV) the chain is on the cytoplasmic side.

It belongs to the G-protein coupled receptor 1 family.

The protein resides in the cell membrane. Odorant receptor. This chain is Olfactory receptor 5H6 (OR5H6), found in Homo sapiens (Human).